A 353-amino-acid polypeptide reads, in one-letter code: Guanine nucleotide-binding protein G(q) subunit alpha (353 aa).

2 S-palmitoyl cysteine lipidation sites follow: C3 and C4. The 322-residue stretch at 32 to 353 (RELKLLLLGT…QLNLKEYNLV (322 aa)) folds into the G-alpha domain. The G1 motif stretch occupies residues 35-48 (KLLLLGTGESGKST). GTP-binding positions include 40-47 (GTGESGKS), 174-180 (LRVRVPT), 199-203 (DVGGQ), 268-271 (NKKD), and A325. Mg(2+)-binding residues include S47 and T180. The interval 172-180 (DILRVRVPT) is G2 motif. Residues 195-204 (FRMVDVGGQR) are G3 motif. The tract at residues 264-271 (ILFLNKKD) is G4 motif. Positions 323 to 328 (TCATDT) are G5 motif.

The protein belongs to the G-alpha family. G(q) subfamily. G proteins are composed of 3 units; alpha, beta and gamma. The alpha chain contains the guanine nucleotide binding site.

Guanine nucleotide-binding proteins (G proteins) are involved as modulators or transducers in various transmembrane signaling systems. This chain is Guanine nucleotide-binding protein G(q) subunit alpha, found in Lymnaea stagnalis (Great pond snail).